We begin with the raw amino-acid sequence, 339 residues long: NADH-quinone oxidoreductase subunit H (339 aa).

The next 9 helical transmembrane spans lie at 9–29 (IFPL…LILC), 50–70 (PNVV…KLLF), 82–102 (ILFI…WAVI), 115–135 (VGVL…IIAG), 161–181 (MGLV…SGII), 187–207 (MPWW…ISVL), 235–255 (MGFA…SAMT), 275–295 (IPGF…FLWI), and 311–331 (GWKV…SVLV).

It belongs to the complex I subunit 1 family. In terms of assembly, NDH-1 is composed of 14 different subunits. Subunits NuoA, H, J, K, L, M, N constitute the membrane sector of the complex.

It is found in the cell inner membrane. The enzyme catalyses a quinone + NADH + 5 H(+)(in) = a quinol + NAD(+) + 4 H(+)(out). Its function is as follows. NDH-1 shuttles electrons from NADH, via FMN and iron-sulfur (Fe-S) centers, to quinones in the respiratory chain. The immediate electron acceptor for the enzyme in this species is believed to be ubiquinone. Couples the redox reaction to proton translocation (for every two electrons transferred, four hydrogen ions are translocated across the cytoplasmic membrane), and thus conserves the redox energy in a proton gradient. This subunit may bind ubiquinone. In Rickettsia conorii (strain ATCC VR-613 / Malish 7), this protein is NADH-quinone oxidoreductase subunit H.